Consider the following 601-residue polypeptide: Invasin CotH3 (601 aa).

The signal sequence occupies residues 1–17; sequence MKLSIISAAFLVAITHA. Asn28, Asn85, Asn170, Asn324, Asn449, Asn527, Asn541, Asn554, Asn561, and Asn571 each carry an N-linked (GlcNAc...) asparagine glycan. The segment covering 539–579 has biased composition (low complexity); it reads SANGTTAAAPAPAAGNSTGKGGNQSISSSASSNKTSAQSTS. The interval 539-581 is disordered; sequence SANGTTAAAPAPAAGNSTGKGGNQSISSSASSNKTSAQSTSGA. Ser579 carries the GPI-anchor amidated serine lipid modification. The propeptide at 580–601 is removed in mature form; sequence GASRSKTAPIVLAISALALLVF.

As to quaternary structure, interacts with HSPA5/BiP on the cell surface of host nasal epithelial cells.

It is found in the cell membrane. Promotes invasion of host epithelial cells by adhering to receptors on the host cell surface to facilitate endocytosis of the pathogen into host cells. Binds HSPA5/BiP protein on the cell surface of host nasal epithelial cells. The sequence is that of Invasin CotH3 from Rhizopus delemar (strain RA 99-880 / ATCC MYA-4621 / FGSC 9543 / NRRL 43880) (Mucormycosis agent).